The sequence spans 2567 residues: Unconventional myosin-XVIIIb (2567 aa).

The interval 41 to 508 is disordered; it reads LVRGTEKEAK…SRDSDQAPED (468 aa). The segment covering 44–54 has biased composition (basic and acidic residues); it reads GTEKEAKEARQ. A compositionally biased stretch (low complexity) spans 71–104; the sequence is SISQPNSKSSSGTRSGSQQISQDDQSSSPGSSDI. Basic and acidic residues-rich tracts occupy residues 105–116 and 160–176; these read LGKESEGSRSPD and LDPD…HDAP. Over residues 196–206 the composition is skewed to polar residues; that stretch reads SRTPCGSQAST. 3 stretches are compositionally biased toward basic and acidic residues: residues 251–265, 278–287, and 326–349; these read TELK…DRQG, RPGKAEKEGA, and SKWD…EKTG. Polar residues predominate over residues 350 to 362; sequence EPQTQMEKTSQVQ. 4 stretches are compositionally biased toward basic and acidic residues: residues 367 to 377, 410 to 420, 471 to 485, and 492 to 508; these read DDLRMGEKAGE, SQTEKGCEAPK, LEKD…KENQ, and EEGK…APED. The 763-residue stretch at 571–1333 folds into the Myosin motor domain; the sequence is DQVEDLASLI…VISRLEKQRE (763 aa). Residue 660–667 participates in ATP binding; it reads GWSGAGKT. The segment at 1208–1232 is disordered; sequence VESRSGQESPPPPQPGRDKPGAGGP. Positions 1213 to 1240 are GPA; the sequence is GQESPPPPQPGRDKPGAGGPLALDIPAL. Ser-1216 bears the Phosphoserine mark. The IQ domain occupies 1336–1365; the sequence is VSQSIVLFQAACKGFLSRQEFKKLKIRRLA. Coiled coils occupy residues 1396–1783, 1825–1961, and 2014–2090; these read SATI…GLIG, KTSV…STVD, and ESQQ…VASS. Residues 1426–2083 are tail; that stretch reads NELRQNTDLL…IRRIADLQAA (658 aa). Residue Ser-1829 is modified to Phosphoserine. Polar residues predominate over residues 2139-2153; sequence TMRTPSRQSATSSRI. 2 disordered regions span residues 2139-2194 and 2217-2249; these read TMRT…PVSP and STER…PSAA. Basic and acidic residues predominate over residues 2158 to 2167; that stretch reads INEEAGDTER. The segment covering 2168–2185 has biased composition (polar residues); the sequence is TQSALALSRARSTNVHSK. Position 2193 is a phosphoserine (Ser-2193). Over residues 2227 to 2238 the composition is skewed to polar residues; the sequence is PLASRSTNTSPL. Ser-2296 and Ser-2309 each carry phosphoserine. The tract at residues 2357 to 2376 is disordered; sequence SRPSMGRKLSSPTTPRDMLL. Ser-2377 bears the Phosphoserine mark. 2 disordered regions span residues 2444–2471 and 2494–2567; these read FLPA…SQRS and KSPE…YLQK. The segment covering 2494–2504 has biased composition (basic and acidic residues); it reads KSPEPKEDPAH. Residues 2506–2520 show a composition bias toward low complexity; it reads SDSSSSSGSIVSFKS. Residues 2537 to 2556 are compositionally biased toward basic and acidic residues; it reads GGERTSPERREPGTGRKDDD.

The protein belongs to the TRAFAC class myosin-kinesin ATPase superfamily. Myosin family. In terms of assembly, homodimer. May interact with F actin through the GPA motif (Gly/Pro/Ala-rich). Selectively expressed in cardiac and skeletal muscles. Weakly expressed in testis, pancreas, placenta, prostate, lung and thymus.

It is found in the cytoplasm. Its subcellular location is the nucleus. It localises to the myofibril. The protein localises to the sarcomere. Its function is as follows. May be involved in intracellular trafficking of the muscle cell when in the cytoplasm, whereas entering the nucleus, may be involved in the regulation of muscle specific genes. May play a role in the control of tumor development and progression; restored MYO18B expression in lung cancer cells suppresses anchorage-independent growth. The sequence is that of Unconventional myosin-XVIIIb (MYO18B) from Homo sapiens (Human).